Consider the following 305-residue polypeptide: Dihydroorotate dehydrogenase B (NAD(+)), catalytic subunit (305 aa).

FMN is bound by residues S23 and K47 to G48. Substrate contacts are provided by residues K47 and N71–L75. Residues N101 and N129 each coordinate FMN. A substrate-binding site is contributed by N129. Residue C132 is the Nucleophile of the active site. FMN contacts are provided by K167 and I193. Residue N194–T195 participates in substrate binding. Residues G219, G245–G246, and G267–T268 contribute to the FMN site.

It belongs to the dihydroorotate dehydrogenase family. Type 1 subfamily. In terms of assembly, heterotetramer of 2 PyrK and 2 PyrD type B subunits. Requires FMN as cofactor.

The protein localises to the cytoplasm. It catalyses the reaction (S)-dihydroorotate + NAD(+) = orotate + NADH + H(+). It functions in the pathway pyrimidine metabolism; UMP biosynthesis via de novo pathway; orotate from (S)-dihydroorotate (NAD(+) route): step 1/1. In terms of biological role, catalyzes the conversion of dihydroorotate to orotate with NAD(+) as electron acceptor. This chain is Dihydroorotate dehydrogenase B (NAD(+)), catalytic subunit (pyrD), found in Geobacter sp. (strain M21).